Here is a 608-residue protein sequence, read N- to C-terminus: Histone-arginine methyltransferase CARM1 (608 aa).

The tract at residues 28-139 (ATVSVFPGAR…GHTLERSVFS (112 aa)) is interaction with C9orf72. Residues 147–454 (AVQYFQFYGY…KRQSYDISIV (308 aa)) enclose the SAM-dependent MTase PRMT-type domain. 4 residues coordinate S-adenosyl-L-methionine: Q160, R169, G193, and E215. S217 bears the Phosphoserine mark. Residue K228 forms a Glycyl lysine isopeptide (Lys-Gly) (interchain with G-Cter in ubiquitin) linkage. S-adenosyl-L-methionine contacts are provided by E244 and S272. The tract at residues 347–380 (RILMAKSVKYTVNFLEAKEGDLHRIEIPFKFHML) is required for nuclear translocation. Residues 500–608 (TGSTYNLSSG…IPTNTMHYGS (109 aa)) form a transactivation domain region. R551 bears the Dimethylated arginine mark.

This sequence belongs to the class I-like SAM-binding methyltransferase superfamily. Protein arginine N-methyltransferase family. Homodimer. Interacts with NR1H4. Interacts with SNRPC. Interacts with the C-terminus of NCOA2/GRIP1, NCO3/ACTR and NCOA1/SRC1. Part of a complex consisting of CARM1, EP300/P300 and NCOA2/GRIP1. Interacts with FLII, TP53, myogenic factor MEF2, EP300/P300, TRIM24, CREBBP and CTNNB1. Interacts with RELA. Identified in a complex containing CARM1, TRIM24 and NCOA2/GRIP1. Interacts with NCOA3/SRC3. Interacts with SKP2. Interacts (via PH domain-like fold) with C9orf72. Interacts with PARP1; promoting PARP1 recruimtent to replication forks. Post-translationally, phosphorylation at Ser-217 is strongly increased during mitosis, and decreases rapidly to a very low, basal level after entry into the G1 phase of the cell cycle. Phosphorylation at Ser-217 interferes with S-adenosyl-L-methionine binding and strongly reduces methyltransferase activity. Phosphorylation at Ser-217 may promote cytosolic location. In terms of processing, auto-methylated on Arg-551. Methylation enhances transcription coactivator activity. Methylation is required for its role in the regulation of pre-mRNA alternative splicing. Ubiquitinated by E3 ubiquitin-protein ligase complex containing FBXO9 at Lys-228; leading to proteasomal degradation. Ubiquitously expressed. Within the brain, present in proliferating cells from lateral ventricular zone and dentate gyrus (at protein level).

Its subcellular location is the nucleus. It localises to the cytoplasm. The protein resides in the chromosome. It catalyses the reaction L-arginyl-[protein] + 2 S-adenosyl-L-methionine = N(omega),N(omega)-dimethyl-L-arginyl-[protein] + 2 S-adenosyl-L-homocysteine + 2 H(+). With respect to regulation, methylation of H3R17 (H3R17me) by CARM1 is stimulated by preacetylation of H3 'Lys-18' (H3K18ac) H3 'Lys-23' (H3K23ac) by EP300 and blocked by citrullination of H3 'Arg-17' (H3R17ci) by PADI4. Its function is as follows. Methylates (mono- and asymmetric dimethylation) the guanidino nitrogens of arginyl residues in several proteins involved in DNA packaging, transcription regulation, pre-mRNA splicing, and mRNA stability. Recruited to promoters upon gene activation together with histone acetyltransferases from EP300/P300 and p160 families, methylates histone H3 at 'Arg-17' (H3R17me), forming mainly asymmetric dimethylarginine (H3R17me2a), leading to activation of transcription via chromatin remodeling. During nuclear hormone receptor activation and TCF7L2/TCF4 activation, acts synergically with EP300/P300 and either one of the p160 histone acetyltransferases NCOA1/SRC1, NCOA2/GRIP1 and NCOA3/ACTR or CTNNB1/beta-catenin to activate transcription. During myogenic transcriptional activation, acts together with NCOA3/ACTR as a coactivator for MEF2C. During monocyte inflammatory stimulation, acts together with EP300/P300 as a coactivator for NF-kappa-B. Acts as a coactivator for PPARG, promotes adipocyte differentiation and the accumulation of brown fat tissue. Plays a role in the regulation of pre-mRNA alternative splicing by methylation of splicing factors. Also seems to be involved in p53/TP53 transcriptional activation. Methylates EP300/P300, both at 'Arg-2142', which may loosen its interaction with NCOA2/GRIP1, and at 'Arg-580' and 'Arg-604' in the KIX domain, which impairs its interaction with CREB and inhibits CREB-dependent transcriptional activation. Also methylates arginine residues in RNA-binding proteins PABPC1, ELAVL1 and ELAV4, which may affect their mRNA-stabilizing properties and the half-life of their target mRNAs. Acts as a transcriptional coactivator of ACACA/acetyl-CoA carboxylase by enriching H3R17 methylation at its promoter, thereby positively regulating fatty acid synthesis. Independently of its methyltransferase activity, involved in replication fork progression: promotes PARP1 recruitment to replication forks, leading to poly-ADP-ribosylation of chromatin at replication forks and reduced fork speed. This Mus musculus (Mouse) protein is Histone-arginine methyltransferase CARM1 (Carm1).